A 392-amino-acid polypeptide reads, in one-letter code: Tryptophan synthase beta chain 1 (392 aa).

Lys-85 is modified (N6-(pyridoxal phosphate)lysine).

The protein belongs to the TrpB family. In terms of assembly, tetramer of two alpha and two beta chains. The cofactor is pyridoxal 5'-phosphate.

The catalysed reaction is (1S,2R)-1-C-(indol-3-yl)glycerol 3-phosphate + L-serine = D-glyceraldehyde 3-phosphate + L-tryptophan + H2O. Its pathway is amino-acid biosynthesis; L-tryptophan biosynthesis; L-tryptophan from chorismate: step 5/5. In terms of biological role, the beta subunit is responsible for the synthesis of L-tryptophan from indole and L-serine. The polypeptide is Tryptophan synthase beta chain 1 (trpB1) (Methanothermobacter thermautotrophicus (strain ATCC 29096 / DSM 1053 / JCM 10044 / NBRC 100330 / Delta H) (Methanobacterium thermoautotrophicum)).